A 173-amino-acid polypeptide reads, in one-letter code: Peptidoglycan-associated lipoprotein (173 aa).

Residues 1 to 21 form the signal peptide; that stretch reads MQLNKVLKGLMIALPVMAIAA. Cysteine 22 carries the N-palmitoyl cysteine lipid modification. The S-diacylglycerol cysteine moiety is linked to residue cysteine 22. Residues 30-58 form a disordered region; the sequence is NDGSEGMLGAGTGMDANGGNGNMSSEEQA. Over residues 35–50 the composition is skewed to gly residues; the sequence is GMLGAGTGMDANGGNG. An OmpA-like domain is found at 60 to 173; that stretch reads LQMQQLQQNN…SKNRRAVLVY (114 aa).

This sequence belongs to the Pal lipoprotein family. In terms of assembly, the Tol-Pal system is composed of five core proteins: the inner membrane proteins TolA, TolQ and TolR, the periplasmic protein TolB and the outer membrane protein Pal. They form a network linking the inner and outer membranes and the peptidoglycan layer.

The protein resides in the cell outer membrane. Part of the Tol-Pal system, which plays a role in outer membrane invagination during cell division and is important for maintaining outer membrane integrity. The protein is Peptidoglycan-associated lipoprotein of Escherichia coli O157:H7.